The primary structure comprises 208 residues: MARYTGPVCRLCRREGMKLFLKGDRCYTGKCAIDRRAYAPGQHGQSRGKKPTEYGIQLREKQKVRRIYGVQEKQFRSYYDKANRQKGIVGENLLRLLERRLDNVVFQLGFATSRPEARQLVRHGHFTINGRRVDIPSFLVRVGDVVGVKEASKSSPRLKEILSSLDRTPPKWMSLDANAATGTIIALPDREDIQLPIQEHLIVEKYSR.

Residues 99–165 form the S4 RNA-binding domain; the sequence is RRLDNVVFQL…PRLKEILSSL (67 aa).

The protein belongs to the universal ribosomal protein uS4 family. In terms of assembly, part of the 30S ribosomal subunit. Contacts protein S5. The interaction surface between S4 and S5 is involved in control of translational fidelity.

Functionally, one of the primary rRNA binding proteins, it binds directly to 16S rRNA where it nucleates assembly of the body of the 30S subunit. With S5 and S12 plays an important role in translational accuracy. In Desulfitobacterium hafniense (strain DSM 10664 / DCB-2), this protein is Small ribosomal subunit protein uS4.